The primary structure comprises 603 residues: Palladin (603 aa).

The tract at residues 63–67 (FPPPP) is interaction with VASP. Ser-133 carries the phosphoserine modification. Positions 134–156 (PPTPAALLSPTKEPPPLLAKPKL) are disordered. At Thr-136 the chain carries Phosphothreonine. 4 positions are modified to phosphoserine: Ser-142, Ser-170, Ser-256, and Ser-261. One can recognise an Ig-like C2-type 1 domain in the interval 278–362 (PFFEMKLKHY…MAANTQGRVS (85 aa)). The tract at residues 373 to 402 (NQRGRSPRSPPGHPHARRPRSRSRDSGDEN) is disordered. Residues Ser-378, Ser-381, and Ser-393 each carry the phosphoserine modification. At Ser-395 the chain carries Phosphoserine; by PKB/AKT1. Ser-398 carries the phosphoserine modification. 2 consecutive Ig-like C2-type domains span residues 412–503 (PHFL…LVVA) and 511–601 (PVFI…ARLD). Interaction with EZR regions lie at residues 414–503 (FLQA…LVVA) and 513–603 (FIEK…LDVY). Cys-433 and Cys-485 are joined by a disulfide.

Belongs to the myotilin/palladin family. As to quaternary structure, interacts with EPS8. Interacts with LASP1. Interacts with VASP. Interacts with ACTN. Interacts with SORBS2. Interacts with PFN1. Interacts with LPP. Interacts with SPIN90. Interacts with SRC. Interacts with EZR. Interacts with RAI14. Phosphorylated predominantly on serines and, to a lesser extent, on tyrosines. Phosphorylation at Ser-395 by PKB/AKT1 modulates cytoskeletal organization and cell motility. In adult central nervous system is detected in the brain and spinal cord, specially in the olfactory bulb, cerebral and cerebellar cortices, hippocampus, amygdala, superior colluculus, and superficial laminae of the spinal dorsal horn.

Its subcellular location is the cytoplasm. The protein resides in the cytoskeleton. It localises to the cell junction. It is found in the focal adhesion. The protein localises to the myofibril. Its subcellular location is the sarcomere. The protein resides in the z line. It localises to the cell projection. It is found in the ruffle. The protein localises to the podosome. Its subcellular location is the lamellipodium. The protein resides in the axon. It localises to the growth cone. Cytoskeletal protein required for organization of normal actin cytoskeleton. Roles in establishing cell morphology, motility, cell adhesion and cell-extracellular matrix interactions in a variety of cell types. May function as a scaffolding molecule with the potential to influence both actin polymerization and the assembly of existing actin filaments into higher-order arrays. Binds to proteins that bind to either monomeric or filamentous actin. Localizes at sites where active actin remodeling takes place, such as lamellipodia and membrane ruffles. Different isoforms may have functional differences. Plays a role in neurite outgrowth and in the establishment of polarity during neuronal morphogenesis. Participates in the acquisition of the reactive astrocyte morphology. This chain is Palladin (Palld), found in Rattus norvegicus (Rat).